The following is a 320-amino-acid chain: Ferrochelatase (320 aa).

The Fe cation site is built by His-194 and Glu-275.

The protein belongs to the ferrochelatase family. In terms of assembly, monomer.

It localises to the cytoplasm. It catalyses the reaction heme b + 2 H(+) = protoporphyrin IX + Fe(2+). The protein operates within porphyrin-containing compound metabolism; protoheme biosynthesis; protoheme from protoporphyrin-IX: step 1/1. Its function is as follows. Catalyzes the ferrous insertion into protoporphyrin IX. This is Ferrochelatase from Salmonella schwarzengrund (strain CVM19633).